We begin with the raw amino-acid sequence, 333 residues long: Transcription factor TGA2.2 (333 aa).

A compositionally biased stretch (polar residues) spans 1-14; sequence MADASSRTDTSTVL. Residues 1–48 are disordered; that stretch reads MADASSRTDTSTVLDTDDKNQMVDGQSGAIVPSNSSDRSDRSDKPMDQ. Basic and acidic residues predominate over residues 37–48; sequence DRSDRSDKPMDQ. One can recognise a bZIP domain in the interval 47–91; that stretch reads DQKVLRRLAQNREAARKSRLRKKAYVQQLESSKLKLASLEQEINK. The segment at 49–69 is basic motif; that stretch reads KVLRRLAQNREAARKSRLRKK. The leucine-zipper stretch occupies residues 75–89; that stretch reads LESSKLKLASLEQEI. A DOG1 domain is found at 114–330; it reads AMTFDLEYAR…RALSSLWLAR (217 aa).

It belongs to the bZIP family. As to quaternary structure, interacts with NPR1/NH1. Interacts with NPR3/NH3.

The protein localises to the nucleus. Transcriptional regulator involved in defense response. This chain is Transcription factor TGA2.2, found in Oryza sativa subsp. japonica (Rice).